A 316-amino-acid polypeptide reads, in one-letter code: Putative ubiquitin-conjugating enzyme E2 39 (316 aa).

A UBC core domain is found at 57-217; that stretch reads NWVKDIQKEW…VFVFSLKTMH (161 aa). The active-site Glycyl thioester intermediate is the C143.

The protein belongs to the ubiquitin-conjugating enzyme family.

It carries out the reaction S-ubiquitinyl-[E1 ubiquitin-activating enzyme]-L-cysteine + [E2 ubiquitin-conjugating enzyme]-L-cysteine = [E1 ubiquitin-activating enzyme]-L-cysteine + S-ubiquitinyl-[E2 ubiquitin-conjugating enzyme]-L-cysteine.. It functions in the pathway protein modification; protein ubiquitination. Its function is as follows. Accepts the ubiquitin from the E1 complex and catalyzes its covalent attachment to other proteins. The chain is Putative ubiquitin-conjugating enzyme E2 39 (UBC39) from Arabidopsis thaliana (Mouse-ear cress).